A 374-amino-acid polypeptide reads, in one-letter code: Isocitrate dehydrogenase [NAD] catalytic subunit 6, mitochondrial (374 aa).

The transit peptide at 1–44 directs the protein to the mitochondrion; that stretch reads MTMTAFLARRLIGNGSSQILGTSSSSSGPFISVSRAFFSSSTPI. Substrate is bound by residues Arg127, Arg137, Arg158, and Asp245. Mg(2+)-binding residues include Asp245, Asp269, and Asp273.

Belongs to the isocitrate and isopropylmalate dehydrogenases family. Heterooligomer of catalytic and regulatory subunits. Mg(2+) is required as a cofactor. It depends on Mn(2+) as a cofactor. As to expression, ubiquitous. Predominantly expressed in leaves.

It is found in the mitochondrion. It catalyses the reaction D-threo-isocitrate + NAD(+) = 2-oxoglutarate + CO2 + NADH. Functionally, catalytic subunit of the NAD(+)-dependent isocitrate dehydrogenase involved in the oxidative decarboxylation of isocitrate to 2-oxoglutarate. Performs an essential role in the oxidative function of the citric acid cycle. This chain is Isocitrate dehydrogenase [NAD] catalytic subunit 6, mitochondrial (IDH6), found in Arabidopsis thaliana (Mouse-ear cress).